Here is a 466-residue protein sequence, read N- to C-terminus: MNKTLYEKIYDSHVVHSEKNGLSILYVDLHLLHEVTSPQAFESLRIKDRTVRQPKKTFATMDHNVSTESKDINASGSMAKIQMQQLIKNCKEFHISLYDLNHPNQGIVHVISPEQGMTLPGMVIVCGDSHTSTHGAFGALSFGIGTSEVEHVLATQTLKQQRFKNMKIEVIGKIGNFITAKDVILYIIGKIGSSAGTGYIIEFCGNVIKKMSMEERMTVCNMAIELGAKSGLIAPDETTYLYLKNKTYSPHGRNWQKAIEYWKTLKTDHNAIFDKVFTIDISNILPQVTWGTNPDQVIGINEKIPDFTSFQNIVKKDLAKSACKYMDLKPGTYLTDITIDKVFIGSCTNSRIEDLRSASKILKHNKISKNVKAIVVPGSGLVKRQAESEGLDKIFIEAGFEWRLPGCSMCLGMNNDRLSENERCASTSNRNFEGRQGRNGRTHLVSPIMAALAALYGKFSNPNKLN.

[4Fe-4S] cluster contacts are provided by cysteine 347, cysteine 407, and cysteine 410.

Belongs to the aconitase/IPM isomerase family. LeuC type 1 subfamily. Heterodimer of LeuC and LeuD. [4Fe-4S] cluster serves as cofactor.

It carries out the reaction (2R,3S)-3-isopropylmalate = (2S)-2-isopropylmalate. It functions in the pathway amino-acid biosynthesis; L-leucine biosynthesis; L-leucine from 3-methyl-2-oxobutanoate: step 2/4. Catalyzes the isomerization between 2-isopropylmalate and 3-isopropylmalate, via the formation of 2-isopropylmaleate. The polypeptide is 3-isopropylmalate dehydratase large subunit (Buchnera aphidicola subsp. Diuraphis noxia).